The chain runs to 104 residues: ATP-dependent Clp protease adapter protein ClpS (104 aa).

It belongs to the ClpS family. In terms of assembly, binds to the N-terminal domain of the chaperone ClpA.

Its function is as follows. Involved in the modulation of the specificity of the ClpAP-mediated ATP-dependent protein degradation. In Paraburkholderia xenovorans (strain LB400), this protein is ATP-dependent Clp protease adapter protein ClpS.